A 668-amino-acid chain; its full sequence is Nuclear pore complex protein Nup75 (668 aa).

It belongs to the nucleoporin Nup85 family. Component of the nuclear pore complex (NPC). Component of the NPC Nup107-160 subcomplex.

Its subcellular location is the nucleus. The protein resides in the nuclear pore complex. It localises to the nucleus membrane. Its function is as follows. Component of the nuclear pore complex (NPC) that seems to be required for NPC assembly and maintenance. Required for nuclear import of phosphorylated Mad via importin msk. Has no role in classical nuclear localization signal (cNLS)-dependent nuclear import via importin-beta. Facilitates the interaction between Nup93 and sec13 with msk. The protein is Nuclear pore complex protein Nup75 of Drosophila melanogaster (Fruit fly).